We begin with the raw amino-acid sequence, 131 residues long: Small ribosomal subunit protein uS8 (131 aa).

Belongs to the universal ribosomal protein uS8 family. In terms of assembly, part of the 30S ribosomal subunit. Contacts proteins S5 and S12.

In terms of biological role, one of the primary rRNA binding proteins, it binds directly to 16S rRNA central domain where it helps coordinate assembly of the platform of the 30S subunit. The protein is Small ribosomal subunit protein uS8 of Dictyoglomus turgidum (strain DSM 6724 / Z-1310).